The sequence spans 98 residues: MTAKPEHYDVIRKPVITEKATMTSEANGVVFAVAMEATKPQIKEAVEAIFNVKVKAVNTVVTKGKTKKFKGRPGVRSDRKKAYVTLEEGNTIDVSTGL.

Belongs to the universal ribosomal protein uL23 family. In terms of assembly, part of the 50S ribosomal subunit. Contacts protein L29, and trigger factor when it is bound to the ribosome.

Its function is as follows. One of the early assembly proteins it binds 23S rRNA. One of the proteins that surrounds the polypeptide exit tunnel on the outside of the ribosome. Forms the main docking site for trigger factor binding to the ribosome. The protein is Large ribosomal subunit protein uL23 of Cereibacter sphaeroides (strain ATCC 17029 / ATH 2.4.9) (Rhodobacter sphaeroides).